A 298-amino-acid chain; its full sequence is N-acetylmuramic acid 6-phosphate etherase (298 aa).

The region spanning 55-218 is the SIS domain; sequence IHAQVSGGGR…STGLMIKSGK (164 aa). The active-site Proton donor is Glu83. Glu114 is an active-site residue.

This sequence belongs to the GCKR-like family. MurNAc-6-P etherase subfamily. In terms of assembly, homodimer.

It catalyses the reaction N-acetyl-D-muramate 6-phosphate + H2O = N-acetyl-D-glucosamine 6-phosphate + (R)-lactate. It participates in amino-sugar metabolism; N-acetylmuramate degradation. It functions in the pathway amino-sugar metabolism; 1,6-anhydro-N-acetylmuramate degradation. Its pathway is cell wall biogenesis; peptidoglycan recycling. In terms of biological role, specifically catalyzes the cleavage of the D-lactyl ether substituent of MurNAc 6-phosphate, producing GlcNAc 6-phosphate and D-lactate. Together with AnmK, is also required for the utilization of anhydro-N-acetylmuramic acid (anhMurNAc) either imported from the medium or derived from its own cell wall murein, and thus plays a role in cell wall recycling. The polypeptide is N-acetylmuramic acid 6-phosphate etherase (Escherichia coli (strain K12 / MC4100 / BW2952)).